We begin with the raw amino-acid sequence, 60 residues long: Large ribosomal subunit protein uL30 (60 aa).

It belongs to the universal ribosomal protein uL30 family. Part of the 50S ribosomal subunit.

This is Large ribosomal subunit protein uL30 from Streptococcus uberis (strain ATCC BAA-854 / 0140J).